A 634-amino-acid polypeptide reads, in one-letter code: DNA-directed RNA polymerase subunit gamma (634 aa).

Positions 74, 76, 89, and 92 each coordinate Zn(2+). 3 residues coordinate Mg(2+): Asp-471, Asp-473, and Asp-475.

This sequence belongs to the RNA polymerase beta' chain family. RpoC1 subfamily. In cyanobacteria the RNAP catalytic core is composed of 2 alpha, 1 beta, 1 beta', 1 gamma and 1 omega subunit. When a sigma factor is associated with the core the holoenzyme is formed, which can initiate transcription. It depends on Mg(2+) as a cofactor. The cofactor is Zn(2+).

The enzyme catalyses RNA(n) + a ribonucleoside 5'-triphosphate = RNA(n+1) + diphosphate. Functionally, DNA-dependent RNA polymerase catalyzes the transcription of DNA into RNA using the four ribonucleoside triphosphates as substrates. This Prochlorococcus marinus (strain MIT 9215) protein is DNA-directed RNA polymerase subunit gamma.